The primary structure comprises 292 residues: F-box protein SKIP28 (292 aa).

Positions 21–79 constitute an F-box; degenerate domain; the sequence is LIVLPYLHSLFELLSMIRVSRSLRDAIRDETALWTKLVIEPPLSSRLTDDILSEFSSKS.

As to quaternary structure, part of a SCF (ASK-cullin-F-box) protein ligase complex. Interacts with SKP1A/ASK1 and CUL1.

It participates in protein modification; protein ubiquitination. Component of SCF(ASK-cullin-F-box) E3 ubiquitin ligase complexes, which may mediate the ubiquitination and subsequent proteasomal degradation of target proteins. Required during the endosperm development in embryos. This chain is F-box protein SKIP28 (SKIP28), found in Arabidopsis thaliana (Mouse-ear cress).